A 224-amino-acid chain; its full sequence is Response regulator protein GraR (224 aa).

The 114-residue stretch at 2–115 (QILLVEDDNT…VLIAKLQAIY (114 aa)) folds into the Response regulatory domain. A 4-aspartylphosphate modification is found at D51. A DNA-binding region (ompR/PhoB-type) is located at residues 126 to 224 (KRTLTWQDAI…KVGKGYMAHE (99 aa)). Phosphothreonine is present on residues T128, T130, and T149.

In terms of assembly, interacts with GraX. In terms of processing, phosphorylated by GraS. Phosphorylated by Stk1; phosphorylation increases the DNA-binding activity of GraR.

The protein localises to the cytoplasm. Member of the two-component regulatory system GraR/GraS involved in resistance against cationic antimicrobial peptides (CAMPs). Upon phosphorylation by GraS, functions as a transcription regulator by direct binding to promoter regions of target genes such as adhesins, exoproteins, transporters, toxins, and proteins involved in cell wall synthesis. Down-regulates the expression of many genes involved in RNA and amino acid synthesis or glycolysis. The protein is Response regulator protein GraR (graR) of Staphylococcus aureus (strain bovine RF122 / ET3-1).